The chain runs to 311 residues: Maspardin (311 aa).

One can recognise an AB hydrolase-1 domain in the interval 86-159; the sequence is EFCDGFRKLL…NSFWLMPSFM (74 aa).

Belongs to the AB hydrolase superfamily.

It is found in the cytoplasm. This is Maspardin (spg21) from Danio rerio (Zebrafish).